The following is a 312-amino-acid chain: Src-like-adapter (312 aa).

The segment at 1 to 33 (MLCRLPGPSTSRGEKEMGNSMKSTPAPLERPLS) is disordered. In terms of domain architecture, SH3 spans 38 to 98 (LESDFLAVLN…PGICVARVYH (61 aa)). Residues 100–191 (WLFEGLGRDK…GLCCVLTTPC (92 aa)) form the SH2 domain. The interval 206–312 (CTSPGSPVTL…TQKTKALTAT (107 aa)) is SLA C-terminal. S274 bears the Phosphoserine mark.

In terms of assembly, homodimer. Interacts with phosphorylated CBL, SYK and LAT. Homodimerization and interaction with phosphorylated CBL occurs via its C-terminal domain. Interacts with PDGFRB and EPHA2. Interacts with phosphorylated proteins ZAP70; CD3Z; VAV1 and LCP2 via its SH2 domain. Post-translationally, phosphorylated.

Its subcellular location is the cytoplasm. The protein localises to the endosome. Functionally, adapter protein, which negatively regulates T-cell receptor (TCR) signaling. Inhibits T-cell antigen-receptor induced activation of nuclear factor of activated T-cells. Involved in the negative regulation of positive selection and mitosis of T-cells. May act by linking signaling proteins such as ZAP70 with CBL, leading to a CBL dependent degradation of signaling proteins. This Rattus norvegicus (Rat) protein is Src-like-adapter (Sla).